The chain runs to 379 residues: Chaperone protein DnaJ (379 aa).

The region spanning 5 to 70 (DYYEILGVPK…QKRAAYDQYG (66 aa)) is the J domain. The segment at 134-212 (GVTKEIRIPT…CHGHGRIEKT (79 aa)) adopts a CR-type zinc-finger fold. Zn(2+) is bound by residues C147, C150, C164, C167, C186, C189, C200, and C203. 4 CXXCXGXG motif repeats span residues 147–154 (CEVCHGSG), 164–171 (CPTCHGAG), 186–193 (CPHCQGRG), and 200–207 (CNSCHGHG).

It belongs to the DnaJ family. Homodimer. It depends on Zn(2+) as a cofactor.

The protein localises to the cytoplasm. Functionally, participates actively in the response to hyperosmotic and heat shock by preventing the aggregation of stress-denatured proteins and by disaggregating proteins, also in an autonomous, DnaK-independent fashion. Unfolded proteins bind initially to DnaJ; upon interaction with the DnaJ-bound protein, DnaK hydrolyzes its bound ATP, resulting in the formation of a stable complex. GrpE releases ADP from DnaK; ATP binding to DnaK triggers the release of the substrate protein, thus completing the reaction cycle. Several rounds of ATP-dependent interactions between DnaJ, DnaK and GrpE are required for fully efficient folding. Also involved, together with DnaK and GrpE, in the DNA replication of plasmids through activation of initiation proteins. The sequence is that of Chaperone protein DnaJ from Cronobacter sakazakii (strain ATCC BAA-894) (Enterobacter sakazakii).